We begin with the raw amino-acid sequence, 418 residues long: RapA guanosine triphosphatase-activating protein B (418 aa).

The region spanning 142–407 is the Rap-GAP domain; that stretch reads LVKVCEPEFN…EKASALINVI (266 aa). Residues 304 to 339 form a disordered region; that stretch reads NRVVGEQPSPSLTTTTTTTTTTSPTINSNSPTPSNK. A compositionally biased stretch (low complexity) spans 311 to 338; the sequence is PSPSLTTTTTTTTTTSPTINSNSPTPSN.

Its function is as follows. Mediates the deactivation of rap1 during multicellular development and is required for normal morphogenesis. Also required for the correct patterning of specific subtypes of prestalk cells. The sequence is that of RapA guanosine triphosphatase-activating protein B (rapgapB) from Dictyostelium discoideum (Social amoeba).